The chain runs to 367 residues: Heme A synthase (367 aa).

8 consecutive transmembrane segments (helical) span residues 26 to 46 (IRGW…VGGA), 111 to 131 (LLAR…WVTG), 139 to 159 (LPLL…WWMV), 174 to 194 (LATH…IYRG), 212 to 232 (AAVI…VAGL), 272 to 292 (FVHR…MIAA), 305 to 325 (SVLL…TLLL), and 327 to 347 (VPIG…GFAI). His-274 is a binding site for heme. Heme is bound at residue His-335.

Belongs to the COX15/CtaA family. Type 2 subfamily. As to quaternary structure, interacts with CtaB. Heme b serves as cofactor.

It localises to the cell membrane. The enzyme catalyses Fe(II)-heme o + 2 A + H2O = Fe(II)-heme a + 2 AH2. Its pathway is porphyrin-containing compound metabolism; heme A biosynthesis; heme A from heme O: step 1/1. Functionally, catalyzes the conversion of heme O to heme A by two successive hydroxylations of the methyl group at C8. The first hydroxylation forms heme I, the second hydroxylation results in an unstable dihydroxymethyl group, which spontaneously dehydrates, resulting in the formyl group of heme A. This is Heme A synthase from Sinorhizobium medicae (strain WSM419) (Ensifer medicae).